The primary structure comprises 102 residues: Protein RnfH (102 aa).

The protein belongs to the UPF0125 (RnfH) family.

In Haemophilus influenzae (strain PittEE), this protein is Protein RnfH.